We begin with the raw amino-acid sequence, 57 residues long: MAETRVRKNESIDAALRRFKRSLSKEGTLAEVRKRKHFEKPSVKRKKKSEAARKRKF.

The segment at 32–57 (VRKRKHFEKPSVKRKKKSEAARKRKF) is disordered. Positions 33–57 (RKRKHFEKPSVKRKKKSEAARKRKF) are enriched in basic residues.

The protein belongs to the bacterial ribosomal protein bS21 family.

The chain is Small ribosomal subunit protein bS21 from Shouchella clausii (strain KSM-K16) (Alkalihalobacillus clausii).